We begin with the raw amino-acid sequence, 1343 residues long: Protein cordon-bleu (1343 aa).

Disordered regions lie at residues 1-51 (MNLG…GDCK), 301-479 (KVEL…PAAE), 522-613 (VSVA…NGYE), 733-808 (IDKP…TRVL), 1056-1077 (EKPT…KSLD), and 1105-1148 (INNF…NVFG). Over residues 20–30 (APPPPRPPQPA) the composition is skewed to pro residues. The KKRRAP 1 motif lies at 305 to 310 (KKRRAP). Residues 324-335 (SQISLGSPSSHN) are compositionally biased toward polar residues. The KKRRAP 2 signature appears at 338–343 (KKRKAP). Residues 343–354 (PAPPPTPPPSTP) are compositionally biased toward pro residues. Over residues 390–400 (DLSHSIEDSEP) the composition is skewed to basic and acidic residues. Residues 406–422 (SSSSGDDAAAVGSSSSS) show a composition bias toward low complexity. Residues 445 to 460 (PEPKPEYEPELKKEAS) are compositionally biased toward basic and acidic residues. A compositionally biased stretch (polar residues) spans 552 to 573 (ERMQSVSPMDIMSLNSDSTLPV). Over residues 746–757 (PSQDAKITDNME) the composition is skewed to basic and acidic residues. Residues 773-789 (VELTSQKDTVLQKSQSF) show a composition bias toward polar residues. The span at 1105-1122 (INNFPDTSSARQTPTDTT) shows a compositional bias: polar residues. Residues 1128 to 1137 (KKPELHKSEI) are compositionally biased toward basic and acidic residues. 2 WH2 domains span residues 1167–1187 (IHSS…LRKV) and 1207–1227 (ERSA…LKKT). Positions 1246–1297 (NVHTEVISPRPTSPDFVPPLPPSFSPPPPPPPPLAPAKPPVVLPPGGNPEAA) are disordered. Over residues 1261 to 1292 (FVPPLPPSFSPPPPPPPPLAPAKPPVVLPPGG) the composition is skewed to pro residues. Residues 1297–1317 (AREALLEAIRSGSGAQQLRKV) form the WH2 3 domain.

As to quaternary structure, interacts with pacsin1.

Its subcellular location is the cell membrane. The protein localises to the cytoplasm. It localises to the cytoskeleton. It is found in the cell projection. The protein resides in the ruffle. Its subcellular location is the cytosol. Plays an important role in the reorganization of the actin cytoskeleton. Binds to and sequesters actin monomers (G actin). Nucleates actin polymerization by assembling three actin monomers in cross-filament orientation and thereby promotes growth of actin filaments at the barbed end. Can also mediate actin depolymerization at barbed ends and severing of actin filaments. Promotes formation of cell ruffles. Regulates neuron morphogenesis and increases branching of axons and dendrites. Required for normal embryonic development, including normal development of laterality, normal body size and shape, as well as normal brain, heart and kidney development. Required for normal development of stereocilia and kinocilia in sensory hair cells of neuromasts in the posterior lateral line organ, and thus also for balance keeping and normal swimming behavior. This Danio rerio (Zebrafish) protein is Protein cordon-bleu (cobl).